A 171-amino-acid polypeptide reads, in one-letter code: Ribosome maturation factor RimM (171 aa).

The 75-residue stretch at 93–167 (DGVYYYKDIF…KVYVELMEGL (75 aa)) folds into the PRC barrel domain.

Belongs to the RimM family. In terms of assembly, binds ribosomal protein uS19.

It is found in the cytoplasm. Functionally, an accessory protein needed during the final step in the assembly of 30S ribosomal subunit, possibly for assembly of the head region. Essential for efficient processing of 16S rRNA. May be needed both before and after RbfA during the maturation of 16S rRNA. It has affinity for free ribosomal 30S subunits but not for 70S ribosomes. In Lactobacillus helveticus (strain DPC 4571), this protein is Ribosome maturation factor RimM.